The following is a 185-amino-acid chain: Ribosome-recycling factor (185 aa).

The protein belongs to the RRF family.

It localises to the cytoplasm. Responsible for the release of ribosomes from messenger RNA at the termination of protein biosynthesis. May increase the efficiency of translation by recycling ribosomes from one round of translation to another. The chain is Ribosome-recycling factor from Macrococcus caseolyticus (strain JCSC5402) (Macrococcoides caseolyticum).